Reading from the N-terminus, the 120-residue chain is NAD(P)H-quinone oxidoreductase subunit 3, chloroplastic (120 aa).

3 consecutive transmembrane segments (helical) span residues 7–27 (YDYF…IFSL), 64–84 (MFAL…PWAM), and 89–109 (FGIS…IGLV).

The protein belongs to the complex I subunit 3 family. NDH is composed of at least 16 different subunits, 5 of which are encoded in the nucleus.

The protein resides in the plastid. Its subcellular location is the chloroplast thylakoid membrane. It catalyses the reaction a plastoquinone + NADH + (n+1) H(+)(in) = a plastoquinol + NAD(+) + n H(+)(out). It carries out the reaction a plastoquinone + NADPH + (n+1) H(+)(in) = a plastoquinol + NADP(+) + n H(+)(out). NDH shuttles electrons from NAD(P)H:plastoquinone, via FMN and iron-sulfur (Fe-S) centers, to quinones in the photosynthetic chain and possibly in a chloroplast respiratory chain. The immediate electron acceptor for the enzyme in this species is believed to be plastoquinone. Couples the redox reaction to proton translocation, and thus conserves the redox energy in a proton gradient. This is NAD(P)H-quinone oxidoreductase subunit 3, chloroplastic from Marchantia polymorpha (Common liverwort).